Consider the following 651-residue polypeptide: Protein numb homolog (651 aa).

A PID domain is found at 33-193 (RTGKCSFPVK…ASRTTFTREG (161 aa)). A Phosphothreonine; by AAK1 modification is found at T102. Residue S194 is modified to Phosphoserine. Residues 228 to 255 (SSVAPGNTAPSPSSPTSPTSDATTSLEM) form a disordered region. The segment covering 235–252 (TAPSPSSPTSPTSDATTS) has biased composition (low complexity). T243 bears the Phosphothreonine mark. A Phosphoserine modification is found at S244. S276 and S295 each carry phosphoserine; by CaMK1. Disordered stretches follow at residues 419–483 (QSSG…SPFQ) and 623–651 (LENK…EIEL). Phosphoserine is present on S425. The residue at position 436 (T436) is a Phosphothreonine. Residues 436 to 449 (TPSEADRWLEEVSK) show a composition bias toward basic and acidic residues. Position 438 is a phosphoserine (S438). The span at 453 to 466 (AQQPQASAAPLQPV) shows a compositional bias: low complexity. The segment covering 630–644 (RTNPSPTNPFSSDLQ) has biased composition (polar residues). S634 bears the Phosphoserine mark.

In terms of assembly, interacts with SIAH1. Interacts with LNX. Interacts with CDH1. Interacts with TFAP2A and TFAP2B. Interacts with RALBP1 in a complex also containing EPN1 and TFAP2A during interphase and mitosis. Interacts with AAK1. May interact with DUOXA1. In terms of processing, phosphorylated on Ser-276 and Ser-295 by CaMK1. Isoform 1 and isoform 2 are ubiquitinated by LNX leading to their subsequent proteasomal degradation. Ubiquitinated; mediated by SIAH1 and leading to its subsequent proteasomal degradation.

It localises to the cell membrane. The protein resides in the endosome membrane. In terms of biological role, regulates clathrin-mediated receptor endocytosis. Plays a role in the process of neurogenesis. Required throughout embryonic neurogenesis to maintain neural progenitor cells, also called radial glial cells (RGCs), by allowing their daughter cells to choose progenitor over neuronal cell fate. Not required for the proliferation of neural progenitor cells before the onset of neurogenesis. Also involved postnatally in the subventricular zone (SVZ) neurogenesis by regulating SVZ neuroblasts survival and ependymal wall integrity. May also mediate local repair of brain ventricular wall damage. This Homo sapiens (Human) protein is Protein numb homolog.